The following is a 171-amino-acid chain: Glutathione peroxidase-like peroxiredoxin GPX3 (171 aa).

Residue Cys43 is the Cysteine sulfenic acid (-SOH) intermediate of the active site. A disulfide bridge links Cys43 with Cys89.

Belongs to the glutathione peroxidase family. In terms of assembly, interacts with CAP1 and probably YBP1.

It carries out the reaction a hydroperoxide + [thioredoxin]-dithiol = an alcohol + [thioredoxin]-disulfide + H2O. Involved in oxidative stress response and redox homeostasis. Functions as a sensor and transducer of hydroperoxide stress. In response to hydroperoxide stress it oxidizes (activates) the transcription activator CAP1, which is involved in transcription activation of genes of the oxidative stress response pathway. May also play a direct role in hydroperoxide scavenging. The enzyme is not required for the glutaredoxin-mediated antioxidant function. In the presence of peroxides, GPX3 is directly oxidized at Cys-43 to form a cysteine sulfenic acid (-SOH). Cys-43-SOH then forms either an intramolecular disulfide bond (Cys-43 with Cys-89) or a transient, intermolecular disulfide bond with 'Cys-446' of CAP1, which is further resolved into a CAP1 intramolecular disulfide bond ('Cys-303' with 'Cys-598'), which causes its nuclear accumulation and activation, and a reduced Cys-43 in GPX3. Required for C.albicans-mediated macrophage killing. This Candida albicans (strain SC5314 / ATCC MYA-2876) (Yeast) protein is Glutathione peroxidase-like peroxiredoxin GPX3.